A 437-amino-acid polypeptide reads, in one-letter code: Succinyl-CoA:cyclohexane-1-carboxylate CoA transferase (437 aa).

Gly-221–Ile-225 is a binding site for CoA. Glu-244 (5-glutamyl coenzyme A thioester intermediate) is an active-site residue. CoA-binding residues include Leu-319, Gly-342, and Lys-367.

This sequence belongs to the acetyl-CoA hydrolase/transferase family. As to quaternary structure, homodimer.

The catalysed reaction is cyclohexane-1-carboxylate + succinyl-CoA = cyclohexane-1-carbonyl-CoA + succinate. The enzyme catalyses cyclohexane-1-carboxylate + butanoyl-CoA = cyclohexane-1-carbonyl-CoA + butanoate. Functionally, acyl-CoA transferase involved in the anaerobic degradation of cyclohexane carboxylic acid (CHC). Catalyzes the activation of CHC to cyclohexane-1-carbonyl-CoA (CHCoA). Benzoic acid and cyclohex-1-ene-1-carboxylic acid can also be used as substrates, but with lower specific activity. Shows highest activity with succinyl-CoA and butanoyl-coA as a CoA donor, and lower activity with crotonyl-CoA, acetyl-CoA, glutaryl-CoA, CH1eneCoA, propionyl-CoA and acetoacetyl-CoA. In vitro, the enzyme can use butanoyl-coA as a CoA donor with greater efficiency than succinyl-CoA. However, succinyl-CoA is the most abundant CoA ester in exponentially grown cells, whereas butanoyl-coA is hardly detectable, indicating that succinyl-CoA is the natural CoA donor for CHC activation. The sequence is that of Succinyl-CoA:cyclohexane-1-carboxylate CoA transferase from Geobacter metallireducens (strain ATCC 53774 / DSM 7210 / GS-15).